We begin with the raw amino-acid sequence, 92 residues long: UPF0213 protein M28_Spy1146 (92 aa).

Residues 4–80 (KKAYMYVLEC…KRKTRSQKLA (77 aa)) form the GIY-YIG domain.

This sequence belongs to the UPF0213 family.

The polypeptide is UPF0213 protein M28_Spy1146 (Streptococcus pyogenes serotype M28 (strain MGAS6180)).